Consider the following 454-residue polypeptide: Bifunctional protein GlmU (454 aa).

A pyrophosphorylase region spans residues 1–227; it reads MKKLSVVILA…KMEVEGANNR (227 aa). Residues 9 to 12, Lys-23, Gln-74, 79 to 80, 101 to 103, Gly-138, Glu-152, Asn-167, and Asn-225 each bind UDP-N-acetyl-alpha-D-glucosamine; these read LAAG, GT, and YGD. Residue Asp-103 participates in Mg(2+) binding. Mg(2+) is bound at residue Asn-225. Residues 228-248 form a linker region; sequence LQLAALERYYQHKQAERLLLE. An N-acetyltransferase region spans residues 249–454; that stretch reads GVMLIDPARF…AGWQRPTKKK (206 aa). Arg-331 and Lys-349 together coordinate UDP-N-acetyl-alpha-D-glucosamine. The active-site Proton acceptor is the His-361. Positions 364 and 375 each coordinate UDP-N-acetyl-alpha-D-glucosamine. Residues Ala-378, 384–385, Ser-403, Ala-421, and Arg-438 each bind acetyl-CoA; that span reads NY.

It in the N-terminal section; belongs to the N-acetylglucosamine-1-phosphate uridyltransferase family. In the C-terminal section; belongs to the transferase hexapeptide repeat family. In terms of assembly, homotrimer. Mg(2+) serves as cofactor.

The protein localises to the cytoplasm. The enzyme catalyses alpha-D-glucosamine 1-phosphate + acetyl-CoA = N-acetyl-alpha-D-glucosamine 1-phosphate + CoA + H(+). It catalyses the reaction N-acetyl-alpha-D-glucosamine 1-phosphate + UTP + H(+) = UDP-N-acetyl-alpha-D-glucosamine + diphosphate. The protein operates within nucleotide-sugar biosynthesis; UDP-N-acetyl-alpha-D-glucosamine biosynthesis; N-acetyl-alpha-D-glucosamine 1-phosphate from alpha-D-glucosamine 6-phosphate (route II): step 2/2. Its pathway is nucleotide-sugar biosynthesis; UDP-N-acetyl-alpha-D-glucosamine biosynthesis; UDP-N-acetyl-alpha-D-glucosamine from N-acetyl-alpha-D-glucosamine 1-phosphate: step 1/1. It participates in bacterial outer membrane biogenesis; LPS lipid A biosynthesis. Catalyzes the last two sequential reactions in the de novo biosynthetic pathway for UDP-N-acetylglucosamine (UDP-GlcNAc). The C-terminal domain catalyzes the transfer of acetyl group from acetyl coenzyme A to glucosamine-1-phosphate (GlcN-1-P) to produce N-acetylglucosamine-1-phosphate (GlcNAc-1-P), which is converted into UDP-GlcNAc by the transfer of uridine 5-monophosphate (from uridine 5-triphosphate), a reaction catalyzed by the N-terminal domain. The polypeptide is Bifunctional protein GlmU (Mannheimia succiniciproducens (strain KCTC 0769BP / MBEL55E)).